Consider the following 370-residue polypeptide: Phosphate acyltransferase (370 aa).

Positions 349–370 (SAGRAGQDAPDEMAAPGRSEKR) are disordered.

It belongs to the PlsX family. In terms of assembly, homodimer. Probably interacts with PlsY.

It localises to the cytoplasm. The catalysed reaction is a fatty acyl-[ACP] + phosphate = an acyl phosphate + holo-[ACP]. Its pathway is lipid metabolism; phospholipid metabolism. Its function is as follows. Catalyzes the reversible formation of acyl-phosphate (acyl-PO(4)) from acyl-[acyl-carrier-protein] (acyl-ACP). This enzyme utilizes acyl-ACP as fatty acyl donor, but not acyl-CoA. In Cereibacter sphaeroides (strain ATCC 17029 / ATH 2.4.9) (Rhodobacter sphaeroides), this protein is Phosphate acyltransferase.